Reading from the N-terminus, the 278-residue chain is NAD kinase (278 aa).

The active-site Proton acceptor is Asp56. Residues 56 to 57, 132 to 133, Arg158, Asp160, and 171 to 176 each bind NAD(+); these read DG, NE, and TAYNKS.

Belongs to the NAD kinase family. A divalent metal cation serves as cofactor.

The protein localises to the cytoplasm. The enzyme catalyses NAD(+) + ATP = ADP + NADP(+) + H(+). Its function is as follows. Involved in the regulation of the intracellular balance of NAD and NADP, and is a key enzyme in the biosynthesis of NADP. Catalyzes specifically the phosphorylation on 2'-hydroxyl of the adenosine moiety of NAD to yield NADP. This chain is NAD kinase, found in Streptococcus pyogenes serotype M1.